The sequence spans 419 residues: UDP-N-acetylglucosamine 1-carboxyvinyltransferase (419 aa).

Phosphoenolpyruvate is bound at residue 22-23 (KN). A UDP-N-acetyl-alpha-D-glucosamine-binding site is contributed by Arg93. The active-site Proton donor is the Cys117. Cys117 carries the 2-(S-cysteinyl)pyruvic acid O-phosphothioketal modification. The UDP-N-acetyl-alpha-D-glucosamine site is built by Asp307 and Ile329.

The protein belongs to the EPSP synthase family. MurA subfamily.

It localises to the cytoplasm. It catalyses the reaction phosphoenolpyruvate + UDP-N-acetyl-alpha-D-glucosamine = UDP-N-acetyl-3-O-(1-carboxyvinyl)-alpha-D-glucosamine + phosphate. It participates in cell wall biogenesis; peptidoglycan biosynthesis. Functionally, cell wall formation. Adds enolpyruvyl to UDP-N-acetylglucosamine. The protein is UDP-N-acetylglucosamine 1-carboxyvinyltransferase of Shewanella baltica (strain OS195).